The primary structure comprises 148 residues: Lysozyme C-1 (148 aa).

Residues 1–18 form the signal peptide; that stretch reads MKALLVLGFLLLSASVQA. Positions 19–148 constitute a C-type lysozyme domain; that stretch reads KIYERCQFAR…LSGYIRNCGV (130 aa). Disulfide bonds link Cys-24-Cys-146, Cys-48-Cys-134, Cys-83-Cys-99, and Cys-95-Cys-113. Catalysis depends on residues Glu-53 and Asp-71.

It belongs to the glycosyl hydrolase 22 family. In terms of assembly, monomer. As to expression, expressed in lung, small intestine and spleen.

Its subcellular location is the secreted. The enzyme catalyses Hydrolysis of (1-&gt;4)-beta-linkages between N-acetylmuramic acid and N-acetyl-D-glucosamine residues in a peptidoglycan and between N-acetyl-D-glucosamine residues in chitodextrins.. Lysozymes have primarily a bacteriolytic function; those in tissues and body fluids are associated with the monocyte-macrophage system and enhance the activity of immunoagents. In the intestine they may also have a digestive function. The polypeptide is Lysozyme C-1 (Lyz1) (Rattus norvegicus (Rat)).